The sequence spans 271 residues: Glutamate racemase (271 aa).

Residues 12–13 (DS) and 44–45 (YG) each bind substrate. Cys75 serves as the catalytic Proton donor/acceptor. 76 to 77 (NS) contacts substrate. Cys185 acts as the Proton donor/acceptor in catalysis. 186 to 187 (TH) serves as a coordination point for substrate.

Belongs to the aspartate/glutamate racemases family.

The catalysed reaction is L-glutamate = D-glutamate. It functions in the pathway cell wall biogenesis; peptidoglycan biosynthesis. Its function is as follows. Provides the (R)-glutamate required for cell wall biosynthesis. The polypeptide is Glutamate racemase (Mycobacterium bovis (strain BCG / Pasteur 1173P2)).